A 387-amino-acid chain; its full sequence is F-box only protein 4 (387 aa).

2 positions are modified to phosphoserine: Ser12 and Ser48. Positions 56–102 (ASTLTRLPIDVQLYILSFLSPHDLCQLGSTNHYWNETVRDPILWRYF) constitute an F-box domain.

Homodimer. Part of the SCF (SKP1-CUL1-F-box) E3 ubiquitin-protein ligase complex SCF(FBXO4) formed of CUL1, SKP1, RBX1 and FBXO4. Interacts with TERF1; this interaction is prevented in the presence of GNL3L. Identified in a complex with CRYAB and CCND1. Post-translationally, phosphorylation at Ser-12 varies during the cell cycle. It is low in resting cells and high in the S phase and the G2/M phase of the cell cycle. Phosphorylation is decreased during late G1 phase. Phosphorylation at Ser-12 promotes homodimerization and is necessary for optimal ubiquitin ligase activity towards CCND1.

The protein localises to the cytoplasm. Its pathway is protein modification; protein ubiquitination. Substrate recognition component of a SCF (SKP1-CUL1-F-box protein) E3 ubiquitin-protein ligase complex that mediates the ubiquitination and subsequent proteasomal degradation of target proteins. Promotes ubiquitination of cyclin-D1 (CCND1) and its subsequent proteasomal degradation. However, it does not act as a major regulator of CCND1 stability during the G1/S transition. Recognizes TERF1 and promotes its ubiquitination together with UBE2D1. Promotes ubiquitination of FXR1 following phosphorylation of FXR1 by GSK3B, leading to FXR1 degradation by the proteasome. The polypeptide is F-box only protein 4 (FBXO4) (Homo sapiens (Human)).